The sequence spans 475 residues: Divinyl ether synthase CYP74M1 (475 aa).

Heme is bound at residue Cys-427.

This sequence belongs to the cytochrome P450 family. Requires heme as cofactor.

The catalysed reaction is (13S)-hydroperoxy-(9Z,11E)-octadecadienoate = etheroleate + H2O. The enzyme catalyses (13S)-hydroperoxy-(9Z,11E,15Z)-octadecatrienoate = etherolenate + H2O. The protein operates within lipid metabolism; oxylipin biosynthesis. In terms of biological role, divinyl ether synthase involved in oxylipin biosynthesis. Catalyzes the conversion of (13S)-hydroperoxy-(9Z,11E)-octadecadienoate (13-HPOD) to etheroleate and (13S)-hydroperoxy-(9Z,11E,15Z)-octadecatrienoate (13-HPOT) to etherolenate. Has no activity with the corresponding 9-hydroperoxides (9-HPOD and 9-HPOT). This Selaginella moellendorffii (Spikemoss) protein is Divinyl ether synthase CYP74M1.